The chain runs to 253 residues: Phycoerythrobilin:ferredoxin oxidoreductase (253 aa).

This sequence belongs to the HY2 family.

The catalysed reaction is (3Z)-phycoerythrobilin + oxidized 2[4Fe-4S]-[ferredoxin] = 15,16-dihydrobiliverdin + reduced 2[4Fe-4S]-[ferredoxin] + 2 H(+). Catalyzes the two-electron reduction of the C2 and C3(1) diene system of 15,16-dihydrobiliverdin. In Prochlorococcus marinus (strain MIT 9312), this protein is Phycoerythrobilin:ferredoxin oxidoreductase.